The chain runs to 281 residues: tRNA uridine(34) hydroxylase (281 aa).

The 98-residue stretch at 125 to 222 folds into the Rhodanese domain; it reads AREDVKTIDT…YFLKTKNKDG (98 aa). Residue Cys182 is the Cysteine persulfide intermediate of the active site.

Belongs to the TrhO family.

It catalyses the reaction uridine(34) in tRNA + AH2 + O2 = 5-hydroxyuridine(34) in tRNA + A + H2O. Functionally, catalyzes oxygen-dependent 5-hydroxyuridine (ho5U) modification at position 34 in tRNAs. This is tRNA uridine(34) hydroxylase from Neorickettsia sennetsu (strain ATCC VR-367 / Miyayama) (Ehrlichia sennetsu).